The following is a 534-amino-acid chain: CTP synthase (534 aa).

Positions 1–267 are amidoligase domain; the sequence is MTKYIFVTGG…DQIVCDHLKL (267 aa). CTP is bound at residue Ser13. Ser13 serves as a coordination point for UTP. 14-19 provides a ligand contact to ATP; the sequence is SIGKGI. Tyr54 serves as a coordination point for L-glutamine. Residue Asp71 participates in ATP binding. Mg(2+) is bound by residues Asp71 and Glu141. Residues 148–150, 188–193, and Lys224 contribute to the CTP site; these read DIE and KTKPTQ. Residues 188 to 193 and Lys224 contribute to the UTP site; that span reads KTKPTQ. One can recognise a Glutamine amidotransferase type-1 domain in the interval 292–534; that stretch reads KIALVGKYVE…FVTAAVENMK (243 aa). Position 354 (Gly354) interacts with L-glutamine. Cys381 acts as the Nucleophile; for glutamine hydrolysis in catalysis. Residues 382–385, Glu405, and Arg463 contribute to the L-glutamine site; that span reads LGMQ. Active-site residues include His508 and Glu510.

Belongs to the CTP synthase family. As to quaternary structure, homotetramer.

It catalyses the reaction UTP + L-glutamine + ATP + H2O = CTP + L-glutamate + ADP + phosphate + 2 H(+). The enzyme catalyses L-glutamine + H2O = L-glutamate + NH4(+). The catalysed reaction is UTP + NH4(+) + ATP = CTP + ADP + phosphate + 2 H(+). It participates in pyrimidine metabolism; CTP biosynthesis via de novo pathway; CTP from UDP: step 2/2. Its activity is regulated as follows. Allosterically activated by GTP, when glutamine is the substrate; GTP has no effect on the reaction when ammonia is the substrate. The allosteric effector GTP functions by stabilizing the protein conformation that binds the tetrahedral intermediate(s) formed during glutamine hydrolysis. Inhibited by the product CTP, via allosteric rather than competitive inhibition. Its function is as follows. Catalyzes the ATP-dependent amination of UTP to CTP with either L-glutamine or ammonia as the source of nitrogen. Regulates intracellular CTP levels through interactions with the four ribonucleotide triphosphates. The sequence is that of CTP synthase from Streptococcus agalactiae serotype V (strain ATCC BAA-611 / 2603 V/R).